Reading from the N-terminus, the 225-residue chain is Sodium-dependent neutral amino acid transporter SLC6A17 (225 aa).

Helical transmembrane passes span 1–8, 16–35, and 60–80; these read NVWRFPYL, AYLV…LFFL, and GIGF…NVII. At 81-143 the chain is on the extracellular side; sequence GWSIFYFFKS…NSISESGGLN (63 aa). N-linked (GlcNAc...) asparagine glycosylation occurs at asparagine 105. The next 3 helical transmembrane spans lie at 144–162, 171–188, and 224–225; these read WKMT…MAVV, VMYF…CFLV, and IF.

It belongs to the sodium:neurotransmitter symporter (SNF) (TC 2.A.22) family.

Its subcellular location is the cytoplasmic vesicle. The protein resides in the secretory vesicle. It is found in the synaptic vesicle membrane. The protein localises to the postsynapse. It localises to the presynapse. It carries out the reaction L-proline(in) + Na(+)(in) = L-proline(out) + Na(+)(out). The catalysed reaction is L-leucine(in) + Na(+)(in) = L-leucine(out) + Na(+)(out). The enzyme catalyses glycine(in) + Na(+)(in) = glycine(out) + Na(+)(out). It catalyses the reaction L-alanine(in) + Na(+)(in) = L-alanine(out) + Na(+)(out). It carries out the reaction L-glutamine(in) + Na(+)(in) = L-glutamine(out) + Na(+)(out). In terms of biological role, synaptic vesicle transporter with apparent selectivity for neutral amino acids. The transport is sodium-coupled but chloride-independent, likely driven by the proton electrochemical gradient generated by vacuolar H(+)-ATPase in an overall electrogenic mechanism. May contribute to the synaptic uptake of neurotransmitter precursors in a process coupled in part to vesicle exocytosis. This chain is Sodium-dependent neutral amino acid transporter SLC6A17, found in Bos taurus (Bovine).